The primary structure comprises 28 residues: Nicotinic acetylcholine receptor-binding protein Mnn-3C (28 aa).

An intrachain disulfide couples Cys-3 to Cys-24.

Belongs to the three-finger toxin family. Short-chain subfamily. As to expression, expressed by the venom gland.

The protein resides in the secreted. Functionally, binds and may inhibit nicotinic acetylcholine receptors (nAChR). The chain is Nicotinic acetylcholine receptor-binding protein Mnn-3C from Micrurus nigrocinctus (Central American coral snake).